A 390-amino-acid polypeptide reads, in one-letter code: Ketoisovalerate reductase BEA2 (390 aa).

70 to 75 (GPGNIG) is a binding site for NADP(+). Lys-285 acts as the Proton donor in catalysis. Substrate is bound by residues Asn-289 and Asn-293.

It belongs to the ketopantoate reductase family.

It catalyses the reaction (R)-2-hydroxy-3-methylbutanoate + NADP(+) = 3-methyl-2-oxobutanoate + NADPH + H(+). With respect to regulation, the reductase activity is increased by Mg(2+) (195%), Ca(2+) (169%) and slightly increased by K(+) (123%). The reduction activity is inhibited by Fe(2+) and Co(2+), and almost totally inhibited by Cu(2+), Mn(2+), Zn(2+) and Fe(3+) (from 3% to 9% residual activity respectively). The chelating agent EDTA had little effect, suggesting Mg(2+) and Ca(2+) are not determining factors, though they could promote the reductase enzyme activity. Functionally, ketoisovalerate reductase; part of the gene cluster that mediates the biosynthesis of beauvericin (BEA), a non-ribosomal cyclic hexadepsipeptide that shows antibiotic, antifungal, insecticidal, and cancer cell antiproliferative and antihaptotactic activity. Ketoisovalerate reductase BEA2 catalyzes the NADPH-specific reduction of ketoisovaleric acid to hydroxyisovalerate, a precursor for beauvericin biosynthesis. The nonribosomal cyclodepsipeptide synthetase BEA1 then catalyzes the formation of beauvericin via condensation and cyclization of 3 dipeptidol monomers, each composed of one unit of hydroxyisovalerate and one unit of N-methyl-phenylalanine. The sequence is that of Ketoisovalerate reductase BEA2 from Gibberella intermedia (Bulb rot disease fungus).